The sequence spans 962 residues: Glycine dehydrogenase (decarboxylating) (962 aa).

Residue Lys710 is modified to N6-(pyridoxal phosphate)lysine.

This sequence belongs to the GcvP family. In terms of assembly, the glycine cleavage system is composed of four proteins: P, T, L and H. Requires pyridoxal 5'-phosphate as cofactor.

The catalysed reaction is N(6)-[(R)-lipoyl]-L-lysyl-[glycine-cleavage complex H protein] + glycine + H(+) = N(6)-[(R)-S(8)-aminomethyldihydrolipoyl]-L-lysyl-[glycine-cleavage complex H protein] + CO2. Functionally, the glycine cleavage system catalyzes the degradation of glycine. The P protein binds the alpha-amino group of glycine through its pyridoxal phosphate cofactor; CO(2) is released and the remaining methylamine moiety is then transferred to the lipoamide cofactor of the H protein. The polypeptide is Glycine dehydrogenase (decarboxylating) (Idiomarina loihiensis (strain ATCC BAA-735 / DSM 15497 / L2-TR)).